The sequence spans 225 residues: Redox-sensing transcriptional repressor Rex (225 aa).

The H-T-H motif DNA-binding region spans 16 to 55; the sequence is IYYRYLNILLDADKKRVSSTELSEAVKVDSATIRRDFSYF. 90-95 lines the NAD(+) pocket; that stretch reads GVGNLG.

This sequence belongs to the transcriptional regulatory Rex family. In terms of assembly, homodimer.

Its subcellular location is the cytoplasm. In terms of biological role, modulates transcription in response to changes in cellular NADH/NAD(+) redox state. In Lactiplantibacillus plantarum (strain ATCC BAA-793 / NCIMB 8826 / WCFS1) (Lactobacillus plantarum), this protein is Redox-sensing transcriptional repressor Rex.